The chain runs to 108 residues: Urease subunit gamma (108 aa).

The protein belongs to the urease gamma subunit family. As to quaternary structure, heterotrimer of UreA (gamma), UreB (beta) and UreC (alpha) subunits. Three heterotrimers associate to form the active enzyme.

It localises to the cytoplasm. It carries out the reaction urea + 2 H2O + H(+) = hydrogencarbonate + 2 NH4(+). The protein operates within nitrogen metabolism; urea degradation; CO(2) and NH(3) from urea (urease route): step 1/1. The protein is Urease subunit gamma of Trichodesmium erythraeum (strain IMS101).